The chain runs to 212 residues: Endothelin-1 (212 aa).

The first 17 residues, 1–17, serve as a signal peptide directing secretion; the sequence is MDYLLMIFSLLFVACQG. The propeptide occupies 18–50; sequence APETAVLGAELSAVGENGGEKPTPSPPWRLRRS. 2 disulfide bridges follow: cysteine 53-cysteine 67 and cysteine 55-cysteine 63. Residues 74–212 constitute a propeptide that is removed on maturation; that stretch reads VNTPEHVVPY…RYVTHNRAHW (139 aa). The segment at 109–123 is endothelin-like; the sequence is CQCASQKDKKCWNFC. 2 stretches are compositionally biased toward basic and acidic residues: residues 168 to 181 and 189 to 205; these read RSSE…RSET and SFHD…ERYV. Residues 168–212 form a disordered region; the sequence is RSSEEHLRQTRSETMRNSVKSSFHDPKLKGKPSRERYVTHNRAHW.

It belongs to the endothelin/sarafotoxin family. Expressed in lung, placental stem villi vessels and in cultured placental vascular smooth muscle cells.

It is found in the secreted. Functionally, endothelins are endothelium-derived vasoconstrictor peptides. Probable ligand for G-protein coupled receptors EDNRA and EDNRB which activates PTK2B, BCAR1, BCAR3 and, GTPases RAP1 and RHOA cascade in glomerular mesangial cells. Also binds the DEAR/FBXW7-AS1 receptor. Promotes mesenteric arterial wall remodeling via activation of ROCK signaling and subsequent colocalization of NFATC3 with F-actin filaments. NFATC3 then translocates to the nucleus where it subsequently promotes the transcription of the smooth muscle hypertrophy and differentiation marker ACTA2. The protein is Endothelin-1 (EDN1) of Homo sapiens (Human).